The following is a 332-amino-acid chain: Leucine carboxyl methyltransferase 1 (332 aa).

The disordered stretch occupies residues 1 to 23; sequence MAASLRRPSFTTCSSPTDTDDEG. Residues arginine 71, glycine 96, aspartate 120, 169–170, and glutamate 196 contribute to the S-adenosyl-L-methionine site; that span reads DL.

This sequence belongs to the methyltransferase superfamily. LCMT family.

The enzyme catalyses [phosphatase 2A protein]-C-terminal L-leucine + S-adenosyl-L-methionine = [phosphatase 2A protein]-C-terminal L-leucine methyl ester + S-adenosyl-L-homocysteine. Methylates the carboxyl group of the C-terminal leucine residue of protein phosphatase 2A catalytic subunits to form alpha-leucine ester residues. The sequence is that of Leucine carboxyl methyltransferase 1 (LCMT1) from Bos taurus (Bovine).